We begin with the raw amino-acid sequence, 332 residues long: UPF0194 membrane protein YbhG (332 aa).

An N-terminal signal peptide occupies residues 1–26 (MMKKPVVIELAVVVLAAVVAGGYWWY). Residues 108–209 (EEIAQAAAAV…LNLQDSTLIA (102 aa)) are a coiled coil.

It belongs to the UPF0194 family.

The protein localises to the periplasm. In Shigella sonnei (strain Ss046), this protein is UPF0194 membrane protein YbhG (ybhG).